The chain runs to 346 residues: NADH-ubiquinone oxidoreductase chain 2 (346 aa).

The next 10 membrane-spanning stretches (helical) occupy residues 3 to 23, 25 to 45, 67 to 87, 96 to 116, 122 to 142, 145 to 165, 200 to 220, 238 to 258, 273 to 293, and 324 to 344; these read PIIFTTILLTIMLGTNNVMIS, HWLLVWIGFEMNMLAIIPIMM, SMLLMMAVIINLMFSGQWTVM, MLMTMALAMKLGMAPFHFWVP, IPLSSGLILLTWQKLAPMSVL, IFPSINLNLILTLSILSILIG, TLLNLIIYITMTSTMFTMFMA, IMTILILATLLSMGGLPPLSG, NSIILPTFMAITALLNLYFYM, and FLPTMVVLSTMTLPLTPMLSV.

Belongs to the complex I subunit 2 family. Core subunit of respiratory chain NADH dehydrogenase (Complex I) which is composed of 45 different subunits. Interacts with TMEM242.

It is found in the mitochondrion inner membrane. The catalysed reaction is a ubiquinone + NADH + 5 H(+)(in) = a ubiquinol + NAD(+) + 4 H(+)(out). Functionally, core subunit of the mitochondrial membrane respiratory chain NADH dehydrogenase (Complex I) which catalyzes electron transfer from NADH through the respiratory chain, using ubiquinone as an electron acceptor. Essential for the catalytic activity and assembly of complex I. The protein is NADH-ubiquinone oxidoreductase chain 2 of Bos mutus grunniens (Wild yak).